We begin with the raw amino-acid sequence, 145 residues long: Large-conductance mechanosensitive channel (145 aa).

The next 3 membrane-spanning stretches (helical) occupy residues 14–34 (VMDL…VKSL), 38–58 (LIMP…YFLP), and 81–101 (GSFL…FLMV).

Belongs to the MscL family. As to quaternary structure, homopentamer.

The protein resides in the cell inner membrane. Its function is as follows. Channel that opens in response to stretch forces in the membrane lipid bilayer. May participate in the regulation of osmotic pressure changes within the cell. The protein is Large-conductance mechanosensitive channel of Rhizobium johnstonii (strain DSM 114642 / LMG 32736 / 3841) (Rhizobium leguminosarum bv. viciae).